Here is a 765-residue protein sequence, read N- to C-terminus: Protein transport protein Sec23A (765 aa).

Thr-2 carries the N-acetylthreonine modification. Positions 61, 66, 85, and 88 each coordinate Zn(2+). Residue Thr-308 is modified to Phosphothreonine. The Gelsolin-like repeat unit spans residues 632-718; that stretch reads PEPVLLDSSS…EHGGSQARFL (87 aa).

The protein belongs to the SEC23/SEC24 family. SEC23 subfamily. In terms of assembly, COPII is composed of at least five proteins: the Sec23/24 complex, the Sec13/31 complex and Sar1. Interacts with SEC23IP. Interacts with HTR4. Interacts with SEC16A. Interacts with SLC6A4. Interacts (as part of the Sec23/24 complex) with SEC22B; recruits SEC22B into COPII-coated vesicles and allows the transport of this cargo from the endoplasmic reticulum to the Golgi. Interacts (via Gelsolin-like repeat) with MIA2 and MIA3; specifically involved in the transport of large cargos like the collagen COL7A1. Interacts with DDHD1. Interacts with TMEM39A. Interacts with SACM1L; this interaction is reduced in the absence of TMEM39A. Interacts with kinase FAM20C; transport of FAM20C from the endoplasmic reticulum to the Golgi is likely to be mediated by COPII vesicles.

The protein localises to the cytoplasmic vesicle. Its subcellular location is the COPII-coated vesicle membrane. It localises to the endoplasmic reticulum membrane. The protein resides in the cytoplasm. It is found in the cytosol. In terms of biological role, component of the coat protein complex II (COPII) which promotes the formation of transport vesicles from the endoplasmic reticulum (ER). The coat has two main functions, the physical deformation of the endoplasmic reticulum membrane into vesicles and the selection of cargo molecules for their transport to the Golgi complex. Required for the translocation of insulin-induced glucose transporter SLC2A4/GLUT4 to the cell membrane. In Pongo abelii (Sumatran orangutan), this protein is Protein transport protein Sec23A.